The following is a 334-amino-acid chain: Putative B3 domain-containing protein At3g49610 (334 aa).

Disordered stretches follow at residues 69–89 and 133–178; these read ERRT…GSEK and DEFE…KFDP. Composition is skewed to polar residues over residues 73-84 and 141-157; these read LGSSPTKTNTLF and KSPT…SCLM. Over residues 161-173 the composition is skewed to basic residues; sequence KRKRYQSSGKSKK. The segment at residues 229 to 334 is a DNA-binding region (TF-B3); that stretch reads FNKLLRNDFL…GVLCFALEKE (106 aa).

It is found in the nucleus. This chain is Putative B3 domain-containing protein At3g49610, found in Arabidopsis thaliana (Mouse-ear cress).